The primary structure comprises 500 residues: Bifunctional protein GlmU (500 aa).

The interval 1–242 is pyrophosphorylase; sequence MPVQTAVVVL…SAKVAGANDR (242 aa). UDP-N-acetyl-alpha-D-glucosamine-binding positions include 10–13, Lys-24, Gln-81, and 86–87; these read LAAG and GT. Asp-112 provides a ligand contact to Mg(2+). The UDP-N-acetyl-alpha-D-glucosamine site is built by Gly-151, Glu-167, Asn-182, and Asn-240. Asn-240 contributes to the Mg(2+) binding site. Residues 243–263 form a linker region; sequence VQLSRLAAELNRRTVENWMRA. Residues 264–500 are N-acetyltransferase; that stretch reads GVTVVDPSTT…KQDLKDGIEQ (237 aa). Arg-345 and Lys-363 together coordinate UDP-N-acetyl-alpha-D-glucosamine. His-375 serves as the catalytic Proton acceptor. 2 residues coordinate UDP-N-acetyl-alpha-D-glucosamine: Tyr-378 and Asn-389. Residues Ala-392, 398–399, Ser-417, and Ala-435 each bind acetyl-CoA; that span reads NY. Positions 459-500 are disordered; that stretch reads DGWVQRNRPGTPAAEAASAAGPHHSSDLHETEKQDLKDGIEQ. The segment covering 482 to 500 has biased composition (basic and acidic residues); it reads HSSDLHETEKQDLKDGIEQ.

In the N-terminal section; belongs to the N-acetylglucosamine-1-phosphate uridyltransferase family. The protein in the C-terminal section; belongs to the transferase hexapeptide repeat family. As to quaternary structure, homotrimer. The cofactor is Mg(2+).

Its subcellular location is the cytoplasm. The catalysed reaction is alpha-D-glucosamine 1-phosphate + acetyl-CoA = N-acetyl-alpha-D-glucosamine 1-phosphate + CoA + H(+). The enzyme catalyses N-acetyl-alpha-D-glucosamine 1-phosphate + UTP + H(+) = UDP-N-acetyl-alpha-D-glucosamine + diphosphate. Its pathway is nucleotide-sugar biosynthesis; UDP-N-acetyl-alpha-D-glucosamine biosynthesis; N-acetyl-alpha-D-glucosamine 1-phosphate from alpha-D-glucosamine 6-phosphate (route II): step 2/2. It participates in nucleotide-sugar biosynthesis; UDP-N-acetyl-alpha-D-glucosamine biosynthesis; UDP-N-acetyl-alpha-D-glucosamine from N-acetyl-alpha-D-glucosamine 1-phosphate: step 1/1. It functions in the pathway bacterial outer membrane biogenesis; LPS lipid A biosynthesis. Its function is as follows. Catalyzes the last two sequential reactions in the de novo biosynthetic pathway for UDP-N-acetylglucosamine (UDP-GlcNAc). The C-terminal domain catalyzes the transfer of acetyl group from acetyl coenzyme A to glucosamine-1-phosphate (GlcN-1-P) to produce N-acetylglucosamine-1-phosphate (GlcNAc-1-P), which is converted into UDP-GlcNAc by the transfer of uridine 5-monophosphate (from uridine 5-triphosphate), a reaction catalyzed by the N-terminal domain. The polypeptide is Bifunctional protein GlmU (Rhodococcus opacus (strain B4)).